Consider the following 363-residue polypeptide: 3,4-dihydroxy-2-butanone 4-phosphate synthase (363 aa).

A DHBP synthase region spans residues 1 to 201; sequence MTLSTAQEII…VADLIEYRNK (201 aa). Residues 27–28, aspartate 32, 140–144, and glutamate 164 each bind D-ribulose 5-phosphate; these read RE and RAGHT. Glutamate 28 contributes to the Mg(2+) binding site. Histidine 143 contacts Mg(2+). Positions 202–363 are GTP cyclohydrolase II-like; that stretch reads YETMIERISE…GLEIVEYVCS (162 aa).

This sequence in the N-terminal section; belongs to the DHBP synthase family. In the C-terminal section; belongs to the GTP cyclohydrolase II family. Requires Mg(2+) as cofactor. Mn(2+) serves as cofactor.

The enzyme catalyses D-ribulose 5-phosphate = (2S)-2-hydroxy-3-oxobutyl phosphate + formate + H(+). It participates in cofactor biosynthesis; riboflavin biosynthesis; 2-hydroxy-3-oxobutyl phosphate from D-ribulose 5-phosphate: step 1/1. Catalyzes the conversion of D-ribulose 5-phosphate to formate and 3,4-dihydroxy-2-butanone 4-phosphate. This is 3,4-dihydroxy-2-butanone 4-phosphate synthase (ribB) from Photobacterium phosphoreum.